The following is a 308-amino-acid chain: Uricase (308 aa).

Catalysis depends on charge relay system residues K5 and T65. Urate-binding residues include T65, D66, F177, R194, I242, Q243, and N269. The disordered stretch occupies residues 283-308 (ASVLREPPAPTGFQQFSMDRGDLDEQ).

This sequence belongs to the uricase family.

It carries out the reaction urate + O2 + H2O = 5-hydroxyisourate + H2O2. The protein operates within purine metabolism; urate degradation; (S)-allantoin from urate: step 1/3. In terms of biological role, catalyzes the oxidation of uric acid to 5-hydroxyisourate, which is further processed to form (S)-allantoin. The polypeptide is Uricase (Haloferax volcanii (strain ATCC 29605 / DSM 3757 / JCM 8879 / NBRC 14742 / NCIMB 2012 / VKM B-1768 / DS2) (Halobacterium volcanii)).